Here is a 526-residue protein sequence, read N- to C-terminus: Butyrophilin subfamily 1 member A1 (526 aa).

The first 26 residues, 1-26, serve as a signal peptide directing secretion; the sequence is MAVFPSSGLPRCLLTLILLQLPKLDS. Ig-like V-type domains follow at residues 27-138 and 148-234; these read APFD…ALVH and PHIS…VEIS. The Extracellular portion of the chain corresponds to 27–242; that stretch reads APFDVIGPPE…ISIPASSLPR (216 aa). 2 disulfides stabilise this stretch: Cys50–Cys124 and Cys164–Cys218. N-linked (GlcNAc...) asparagine glycosylation is found at Asn55 and Asn215. Residues 243 to 269 traverse the membrane as a helical segment; it reads LTPWIVAVAVILMVLGLLTIGSIFFTW. Topologically, residues 270–526 are cytoplasmic; the sequence is RLYNERPRER…IPTQPSQGAP (257 aa). The B30.2/SPRY domain occupies 285–479; it reads SKERLLEELK…LTICPIADGP (195 aa). Positions 495–526 are disordered; it reads IPLSPMGEDSAPRDADTLHSKLIPTQPSQGAP. Over residues 504 to 513 the composition is skewed to basic and acidic residues; the sequence is SAPRDADTLH. Residues 517-526 show a composition bias toward polar residues; sequence IPTQPSQGAP.

The protein belongs to the immunoglobulin superfamily. BTN/MOG family. In terms of assembly, seems to associate with xanthine dehydrogenase/oxidase. N-glycosylated.

It is found in the membrane. It localises to the secreted. Functionally, may function in the secretion of milk-fat droplets. May act as a specific membrane-associated receptor for the association of cytoplasmic droplets with the apical plasma membrane. Inhibits the proliferation of CD4 and CD8 T-cells activated by anti-CD3 antibodies, T-cell metabolism and IL2 and IFNG secretion. This is Butyrophilin subfamily 1 member A1 (BTN1A1) from Homo sapiens (Human).